The chain runs to 436 residues: Enolase (436 aa).

Q167 is a binding site for (2R)-2-phosphoglycerate. E209 serves as the catalytic Proton donor. Mg(2+) is bound by residues D246, E291, and D318. Positions 343, 372, 373, and 394 each coordinate (2R)-2-phosphoglycerate. Residue K343 is the Proton acceptor of the active site.

It belongs to the enolase family. In terms of assembly, component of the RNA degradosome, a multiprotein complex involved in RNA processing and mRNA degradation. Mg(2+) is required as a cofactor.

The protein localises to the cytoplasm. Its subcellular location is the secreted. The protein resides in the cell surface. It carries out the reaction (2R)-2-phosphoglycerate = phosphoenolpyruvate + H2O. It functions in the pathway carbohydrate degradation; glycolysis; pyruvate from D-glyceraldehyde 3-phosphate: step 4/5. Its function is as follows. Catalyzes the reversible conversion of 2-phosphoglycerate (2-PG) into phosphoenolpyruvate (PEP). It is essential for the degradation of carbohydrates via glycolysis. The polypeptide is Enolase (Actinobacillus pleuropneumoniae serotype 3 (strain JL03)).